Consider the following 87-residue polypeptide: Small ribosomal subunit protein bS20 (87 aa).

The tract at residues 1 to 20 is disordered; the sequence is MANHKSAEKRARQTIKKTER.

The protein belongs to the bacterial ribosomal protein bS20 family.

In terms of biological role, binds directly to 16S ribosomal RNA. The polypeptide is Small ribosomal subunit protein bS20 (Campylobacter jejuni subsp. jejuni serotype O:2 (strain ATCC 700819 / NCTC 11168)).